The following is a 185-amino-acid chain: Elongation factor P (185 aa).

Belongs to the elongation factor P family.

The protein localises to the cytoplasm. Its pathway is protein biosynthesis; polypeptide chain elongation. Functionally, involved in peptide bond synthesis. Stimulates efficient translation and peptide-bond synthesis on native or reconstituted 70S ribosomes in vitro. Probably functions indirectly by altering the affinity of the ribosome for aminoacyl-tRNA, thus increasing their reactivity as acceptors for peptidyl transferase. This chain is Elongation factor P, found in Picosynechococcus sp. (strain ATCC 27264 / PCC 7002 / PR-6) (Agmenellum quadruplicatum).